Here is a 385-residue protein sequence, read N- to C-terminus: MECEEVQAIVIDNGSSVCKAGFGGDDAPRTAFPSIVGRPRCTGFIVDMDKKDSYFCKKNSCFMGQKDLYIGDEAQSKRGILNVKYPIERGIITNWNDMEEIWYHTFYNELHVAPEEHPVLLTEPPLNPKANREKMTQIMFETFKTPAIYVANQGVLSLYSTGLTTGIVMNSGDGVSHTVPVYEGYILRQAILSLDLAGRDLTDYMNELLTDRGYYFTTKGEKEIVRGIKEKLSYVALDFEAEMQIASASPALEKSYELPDGQVITIGNERFRCPEALFRPYTGIHETIYNSIMKCDDDIRKDLFGSVVLSGGSTMFPGIVDRMNKELTALAPSTMKIKIIAPPERKYSVWIGGSILASLSSFQPRWISKEEYDESGPSIVHRKCF.

It belongs to the actin family.

The protein localises to the cytoplasm. It is found in the cytoskeleton. It catalyses the reaction ATP + H2O = ADP + phosphate + H(+). Its function is as follows. Actins are highly conserved proteins that are involved in various types of cell motility and are ubiquitously expressed in all eukaryotic cells. Multiple isoforms are involved in various cellular functions such as cytoskeleton structure, cell mobility, chromosome movement and muscle contraction. This Dictyostelium discoideum (Social amoeba) protein is Putative actin-25 (act25).